A 518-amino-acid polypeptide reads, in one-letter code: Nitrogenase iron-iron protein alpha chain (518 aa).

[8Fe-7S] cluster-binding residues include Cys49, Cys75, and Cys138. [8Fe-9S-C-homocitryl] cluster contacts are provided by Cys257 and His423.

Belongs to the NifD/NifK/NifE/NifN family. In terms of assembly, hexamer of two alpha, two beta, and two delta chains. The cofactor is [8Fe-7S] cluster. [8Fe-9S-C-homocitryl] cluster serves as cofactor.

The enzyme catalyses N2 + 8 reduced [2Fe-2S]-[ferredoxin] + 16 ATP + 16 H2O = H2 + 8 oxidized [2Fe-2S]-[ferredoxin] + 2 NH4(+) + 16 ADP + 16 phosphate + 6 H(+). This iron-iron protein is part of the nitrogenase complex that catalyzes the key enzymatic reactions in nitrogen fixation. Other nitrogenase complexes utilize a molybdenum-iron protein or a vanadium-iron protein. The polypeptide is Nitrogenase iron-iron protein alpha chain (anfD) (Azotobacter vinelandii).